Reading from the N-terminus, the 1657-residue chain is A disintegrin and metalloproteinase with thrombospondin motifs 7 (1657 aa).

Positions 1 to 20 (MHRGPSLLLILCALASRVLG) are cleaved as a signal peptide. The propeptide occupies 21-220 (PASGLVTEGR…QQQQKRRQQR (200 aa)). N-linked (GlcNAc...) asparagine glycosylation occurs at N84. A disordered region spans residues 165 to 221 (PGHAQPHVVYKHQGSRKQAQQGDSRPSGTCGMQVPPDLEQQREHWEQQQQKRRQQRS). Residues 180 to 191 (RKQAQQGDSRPS) are compositionally biased toward polar residues. The short motif at 192–199 (GTCGMQVP) is the Cysteine switch element. C194 contacts Zn(2+). Positions 226-437 (KWVETLVVAD…GWGLCLDDRP (212 aa)) constitute a Peptidase M12B domain. 11 cysteine pairs are disulfide-bonded: C302/C356, C331/C338, C350/C432, C389/C416, C459/C482, C470/C488, C477/C507, C501/C512, C535/C572, C539/C577, and C550/C562. H372 serves as a coordination point for Zn(2+). E373 is an active-site residue. Zn(2+)-binding residues include H376 and H382. Residues 447-522 (VLPGVLYDVN…VPEGFQPEAV (76 aa)) enclose the Disintegrin domain. The 56-residue stretch at 523–578 (DGGWSGWSAWSDCSRSCGVGVRSSERQCTQPVPKNRGKYCVGERKRSQLCNLPACP) folds into the TSP type-1 1 domain. An N-linked (GlcNAc...) asparagine glycan is attached at N622. The segment at 683 to 794 (QTVSRTFKET…PGVHYQYTIQ (112 aa)) is spacer. TSP type-1 domains are found at residues 804 to 863 (PEFS…EPCP), 864 to 923 (PRWW…NRHV), and 925 to 978 (CPST…QPCQ). Disordered stretches follow at residues 1009 to 1034 (LAPR…EELD), 1073 to 1127 (GGWT…GLEQ), 1140 to 1237 (EDTP…DVVE), 1283 to 1304 (GRDS…SSQH), and 1317 to 1384 (TVPT…ARNA). A compositionally biased stretch (pro residues) spans 1211–1224 (PQSPIPTQPSPPSI). Polar residues-rich tracts occupy residues 1293–1304 (PTFSSPELSSQH) and 1327–1342 (PSGQ…TQSP). 4 TSP type-1 domains span residues 1366–1414 (QPSL…SGND), 1417–1477 (CTLA…CQPG), 1479–1522 (TKPP…PEPG), and 1524–1584 (CEES…LCSH). In terms of domain architecture, PLAC spans 1587–1627 (WPESSRPCATEDCELVEPPRCERDRLSFNFCETLRLLGRCQ).

Interacts with COMP. It depends on Zn(2+) as a cofactor. Post-translationally, N-glycosylated. Can be O-fucosylated by POFUT2 on a serine or a threonine residue found within the consensus sequence C1-X(2)-(S/T)-C2-G of the TSP type-1 repeat domains where C1 and C2 are the first and second cysteine residue of the repeat, respectively. Fucosylated repeats can then be further glycosylated by the addition of a beta-1,3-glucose residue by the glucosyltransferase, B3GALTL. Fucosylation mediates the efficient secretion of ADAMTS family members. Can also be C-glycosylated with one or two mannose molecules on tryptophan residues within the consensus sequence W-X-X-W of the TPRs. N- and C-glycosylations can also facilitate secretion. O-glycosylated proteoglycan; contains chondroitin sulfate. In terms of processing, may be cleaved by a furin endopeptidase. The precursor is sequentially processed.

Its subcellular location is the secreted. It is found in the extracellular space. The protein localises to the extracellular matrix. Functionally, metalloprotease. Was previously shown to degrade COMP. However, a later study found no activity against COMP. The sequence is that of A disintegrin and metalloproteinase with thrombospondin motifs 7 (Adamts7) from Mus musculus (Mouse).